Consider the following 149-residue polypeptide: Ribonuclease pancreatic (149 aa).

Residues 1–25 form the signal peptide; the sequence is MGLEKSFILFPLLILVLGWVQSSLG. 2 residues coordinate substrate: lysine 32 and arginine 35. Histidine 37 serves as the catalytic Proton acceptor. Cystine bridges form between cysteine 51/cysteine 109, cysteine 65/cysteine 120, cysteine 83/cysteine 135, and cysteine 90/cysteine 97. The N-linked (GlcNAc...) asparagine glycan is linked to asparagine 59. 66–70 lines the substrate pocket; it reads KPVNT. Asparagine 87 is a glycosylation site (N-linked (GlcNAc...) asparagine). Residues lysine 91 and arginine 110 each coordinate substrate. Histidine 144 functions as the Proton donor in the catalytic mechanism.

The protein belongs to the pancreatic ribonuclease family. In terms of assembly, monomer. Interacts with and forms tight 1:1 complexes with RNH1. Dimerization of two such complexes may occur. Interaction with RNH1 inhibits this protein. In terms of tissue distribution, pancreas.

The protein resides in the secreted. The enzyme catalyses an [RNA] containing cytidine + H2O = an [RNA]-3'-cytidine-3'-phosphate + a 5'-hydroxy-ribonucleotide-3'-[RNA].. The catalysed reaction is an [RNA] containing uridine + H2O = an [RNA]-3'-uridine-3'-phosphate + a 5'-hydroxy-ribonucleotide-3'-[RNA].. In terms of biological role, endonuclease that catalyzes the cleavage of RNA on the 3' side of pyrimidine nucleotides. Acts on single-stranded and double-stranded RNA. The chain is Ribonuclease pancreatic (RNASE1) from Abrothrix jelskii (Jelski's altiplano mouse).